Here is a 466-residue protein sequence, read N- to C-terminus: 3-isopropylmalate dehydratase large subunit (466 aa).

[4Fe-4S] cluster contacts are provided by cysteine 347, cysteine 407, and cysteine 410.

Belongs to the aconitase/IPM isomerase family. LeuC type 1 subfamily. Heterodimer of LeuC and LeuD. [4Fe-4S] cluster is required as a cofactor.

The catalysed reaction is (2R,3S)-3-isopropylmalate = (2S)-2-isopropylmalate. Its pathway is amino-acid biosynthesis; L-leucine biosynthesis; L-leucine from 3-methyl-2-oxobutanoate: step 2/4. In terms of biological role, catalyzes the isomerization between 2-isopropylmalate and 3-isopropylmalate, via the formation of 2-isopropylmaleate. This is 3-isopropylmalate dehydratase large subunit from Solibacter usitatus (strain Ellin6076).